Consider the following 340-residue polypeptide: Ketol-acid reductoisomerase (NADP(+)) (340 aa).

The region spanning methionine 1 to threonine 183 is the KARI N-terminal Rossmann domain. NADP(+) is bound by residues phenylalanine 26–glutamine 29, lysine 49, serine 54, and aspartate 84–glutamine 87. Residue histidine 109 is part of the active site. Glycine 135 is a binding site for NADP(+). The KARI C-terminal knotted domain occupies threonine 184–isoleucine 329. Residues aspartate 192, glutamate 196, glutamate 228, and glutamate 232 each contribute to the Mg(2+) site. Residue serine 253 participates in substrate binding.

This sequence belongs to the ketol-acid reductoisomerase family. It depends on Mg(2+) as a cofactor.

The enzyme catalyses (2R)-2,3-dihydroxy-3-methylbutanoate + NADP(+) = (2S)-2-acetolactate + NADPH + H(+). It carries out the reaction (2R,3R)-2,3-dihydroxy-3-methylpentanoate + NADP(+) = (S)-2-ethyl-2-hydroxy-3-oxobutanoate + NADPH + H(+). Its pathway is amino-acid biosynthesis; L-isoleucine biosynthesis; L-isoleucine from 2-oxobutanoate: step 2/4. It functions in the pathway amino-acid biosynthesis; L-valine biosynthesis; L-valine from pyruvate: step 2/4. In terms of biological role, involved in the biosynthesis of branched-chain amino acids (BCAA). Catalyzes an alkyl-migration followed by a ketol-acid reduction of (S)-2-acetolactate (S2AL) to yield (R)-2,3-dihydroxy-isovalerate. In the isomerase reaction, S2AL is rearranged via a Mg-dependent methyl migration to produce 3-hydroxy-3-methyl-2-ketobutyrate (HMKB). In the reductase reaction, this 2-ketoacid undergoes a metal-dependent reduction by NADPH to yield (R)-2,3-dihydroxy-isovalerate. In Campylobacter hominis (strain ATCC BAA-381 / DSM 21671 / CCUG 45161 / LMG 19568 / NCTC 13146 / CH001A), this protein is Ketol-acid reductoisomerase (NADP(+)).